The following is a 138-amino-acid chain: 18 kDa antigen 2 (138 aa).

The sHSP domain maps to 21–131; sequence GTRRPAVMPM…KPRRIEINHN (111 aa).

It belongs to the small heat shock protein (HSP20) family.

Not known. This protein is one of the major immune reactive proteins in mycobacteria. In Mycobacterium avium, this protein is 18 kDa antigen 2.